We begin with the raw amino-acid sequence, 367 residues long: UDP-N-acetylglucosamine--N-acetylmuramyl-(pentapeptide) pyrophosphoryl-undecaprenol N-acetylglucosamine transferase (367 aa).

Residues 15–17 (TGG), Asn-127, Arg-163, Ser-191, Ile-249, and Gln-294 each bind UDP-N-acetyl-alpha-D-glucosamine.

The protein belongs to the glycosyltransferase 28 family. MurG subfamily.

It localises to the cell inner membrane. It carries out the reaction di-trans,octa-cis-undecaprenyl diphospho-N-acetyl-alpha-D-muramoyl-L-alanyl-D-glutamyl-meso-2,6-diaminopimeloyl-D-alanyl-D-alanine + UDP-N-acetyl-alpha-D-glucosamine = di-trans,octa-cis-undecaprenyl diphospho-[N-acetyl-alpha-D-glucosaminyl-(1-&gt;4)]-N-acetyl-alpha-D-muramoyl-L-alanyl-D-glutamyl-meso-2,6-diaminopimeloyl-D-alanyl-D-alanine + UDP + H(+). The protein operates within cell wall biogenesis; peptidoglycan biosynthesis. Cell wall formation. Catalyzes the transfer of a GlcNAc subunit on undecaprenyl-pyrophosphoryl-MurNAc-pentapeptide (lipid intermediate I) to form undecaprenyl-pyrophosphoryl-MurNAc-(pentapeptide)GlcNAc (lipid intermediate II). The protein is UDP-N-acetylglucosamine--N-acetylmuramyl-(pentapeptide) pyrophosphoryl-undecaprenol N-acetylglucosamine transferase of Burkholderia cenocepacia (strain HI2424).